The primary structure comprises 261 residues: Ribonuclease HII (261 aa).

Positions His71–Leu260 constitute an RNase H type-2 domain. The a divalent metal cation site is built by Asp77, Glu78, and Asp169.

The protein belongs to the RNase HII family. Requires Mn(2+) as cofactor. Mg(2+) is required as a cofactor.

It is found in the cytoplasm. It carries out the reaction Endonucleolytic cleavage to 5'-phosphomonoester.. In terms of biological role, endonuclease that specifically degrades the RNA of RNA-DNA hybrids. This is Ribonuclease HII from Oceanobacillus iheyensis (strain DSM 14371 / CIP 107618 / JCM 11309 / KCTC 3954 / HTE831).